The chain runs to 743 residues: POU domain, class 2, transcription factor 1 (743 aa).

The span at 1-11 shows a compositional bias: polar residues; sequence MNNPSETSKPS. 4 disordered regions span residues 1 to 34, 67 to 95, 258 to 283, and 357 to 381; these read MNNP…QPVP, SLNV…SVQA, ATPI…EEPS, and SSDS…RRRK. Low complexity predominate over residues 81–95; sequence SQQPSQPSQQPSVQA. Phosphothreonine occurs at positions 270 and 276. Residues 280-354 enclose the POU-specific domain; it reads EEPSDLEELE…LLEKWLNDAE (75 aa). The residue at position 283 (Ser283) is a Phosphoserine. Residues 357–371 show a composition bias toward low complexity; sequence SSDSSLSSPSALNSP. The segment at residues 379-438 is a DNA-binding region (homeobox); that stretch reads RRKKRTSIETNIRVALEKSFLENQKPTSEEITMIADQLNMEKEVIRVWFCNRRQKEKRIN. A phosphoserine mark is found at Ser385 and Ser448. Positions 494 to 504 are enriched in polar residues; the sequence is VTGTSDTTSNN. A disordered region spans residues 494-557; that stretch reads VTGTSDTTSN…TTSTPLSSPL (64 aa). Positions 505–557 are enriched in low complexity; the sequence is TATVISTAPPASSAVTSPSLSPSPSASASTSEASSASETSTTQTTSTPLSSPL.

This sequence belongs to the POU transcription factor family. Class-2 subfamily. In terms of assembly, interacts with POU2AF1; the interaction increases POU2F1 transactivation activity. Interacts with NR3C1, AR, PGR and HCFC1. As to quaternary structure, (Microbial infection) Associates with the herpes simplex virus VP16-induced complex; binding to HCFC1 activates the viral transcriptional activator VP16 for association with POU2F1, to form a multiprotein-DNA complex responsible for activating transcription of the viral immediate early genes. (Microbial infection) Interacts with human herpesvirus 8 (KSHV) protein RTA/ORF50; this interaction enhances RTA/ORF50-mediated transactivation of several viral promoters including K-bZIP promoter. In terms of processing, phosphorylated by PRKDC. In terms of tissue distribution, ubiquitous. Isoform 2 is lymphocyte-specific.

It localises to the nucleus. Transcription factor that binds to the octamer motif (5'-ATTTGCAT-3') and activates the promoters of the genes for some small nuclear RNAs (snRNA) and of genes such as those for histone H2B and immunoglobulins. Modulates transcription transactivation by NR3C1, AR and PGR. Functionally, (Microbial infection) In case of human herpes simplex virus (HSV) infection, POU2F1 forms a multiprotein-DNA complex with the viral transactivator protein VP16 and HCFC1 thereby enabling the transcription of the viral immediate early genes. The protein is POU domain, class 2, transcription factor 1 (POU2F1) of Homo sapiens (Human).